The chain runs to 977 residues: Protein bicaudal C homolog 1 (977 aa).

The tract at residues 1-43 (MASQSEPGYLAAAQSDPGSNSERSTDSPVAGSEDDLVAAAPLL) is disordered. Phosphoserine is present on residues serine 27, serine 32, and serine 45. 2 KH domains span residues 134–201 (RVTL…RARI) and 286–350 (PVST…RQYL). Lysine 400 is modified (N6-acetyllysine). Residues 590–621 (SLGEKVLSSNHGDPSMQTAGPEQASPKSNSVE) show a composition bias toward polar residues. Disordered regions lie at residues 590–622 (SLGE…SVEG), 667–702 (GTKN…GSER), and 794–848 (EGSS…KSRE). Serine 614 and serine 681 each carry phosphoserine. Residues 692–702 (LADKKAPGSER) are compositionally biased toward basic and acidic residues. The span at 794-803 (EGSSLSLSRS) shows a compositional bias: low complexity. The 64-residue stretch at 875–938 (FKGSDLPELF…LLAISELSKN (64 aa)) folds into the SAM domain.

Belongs to the BicC family. As to quaternary structure, interacts (via KH domains) with ANKS6 (via SAM domain) in an RNA-dependent manner. Interacts with ANKS3. In the adult, predominantly expressed in heart and kidney. In 8 week old mice, expressed in growing primary oocytes and in the stromal cells of the theca.

It is found in the cytoplasm. Putative RNA-binding protein. May be involved in regulating gene expression during embryonic development. The chain is Protein bicaudal C homolog 1 (Bicc1) from Mus musculus (Mouse).